The following is a 393-amino-acid chain: Rubredoxin-NAD(+) reductase (393 aa).

FAD contacts are provided by residues 9–12 (SGMA), 33–34 (CA), Lys-42, Val-80, Glu-162, Asp-282, Val-294, and Lys-325.

Belongs to the FAD-dependent oxidoreductase family. In terms of assembly, homodimer. It depends on FAD as a cofactor.

It is found in the cytoplasm. The catalysed reaction is 2 reduced [rubredoxin] + NAD(+) + H(+) = 2 oxidized [rubredoxin] + NADH. It functions in the pathway hydrocarbon metabolism; alkane degradation. Functionally, involved in the hydrocarbon hydroxylating system, which transfers electrons from NADH to rubredoxin reductase and then through rubredoxin to alkane 1 monooxygenase. This is Rubredoxin-NAD(+) reductase (rubB) from Acinetobacter baylyi (strain ATCC 33305 / BD413 / ADP1).